We begin with the raw amino-acid sequence, 206 residues long: Shieldin complex subunit 1 (206 aa).

The tract at residues 27–94 is disordered; that stretch reads SSYEASQRVS…GQLETNEEED (68 aa). Low complexity predominate over residues 32–55; sequence SQRVSQGSSNSLSSLESHPFLSSS. The segment covering 56–74 has biased composition (polar residues); it reads TTDPDSNSLNTEQKGSWDS.

Component of the shieldin complex, consisting of SHLD1, SHLD2, SHLD3 and MAD2L2/REV7. Within the complex, SHLD2 forms a scaffold which interacts with a SHLD3-MAD2L2 subcomplex via its N-terminus, and with SHLD1 via its C-terminus. Interacts with ASTE1.

It localises to the chromosome. Its function is as follows. Component of the shieldin complex, which plays an important role in repair of DNA double-stranded breaks (DSBs). During G1 and S phase of the cell cycle, the complex functions downstream of TP53BP1 to promote non-homologous end joining (NHEJ) and suppress DNA end resection. Mediates various NHEJ-dependent processes including immunoglobulin class-switch recombination, and fusion of unprotected telomeres. This is Shieldin complex subunit 1 from Mus musculus (Mouse).